The primary structure comprises 228 residues: Tungstate uptake system permease protein TupB (228 aa).

The next 5 membrane-spanning stretches (helical) occupy residues 25 to 45 (IIFLSVFVSSTATAIAAAVSI), 65 to 85 (VLYSLMSVPSVIVGLVVAIGL), 102 to 122 (AMIIAQALLVFPLCLGLTYSL), 144 to 164 (VIILIIRELKAELFINVVTTF), and 203 to 223 (MAIALGLVLLMISFAINAVIY). The 197-residue stretch at 26–222 (IFLSVFVSST…MISFAINAVI (197 aa)) folds into the ABC transmembrane type-1 domain.

The protein belongs to the binding-protein-dependent transport system permease family. In terms of assembly, the complex is composed of two ATP-binding proteins (TupC), two transmembrane proteins (TupB) and a solute-binding protein (TupA).

The protein resides in the cell membrane. In terms of biological role, part of an ABC transporter complex involved in tungstate uptake. Probably responsible for the translocation of the substrate across the membrane. The polypeptide is Tungstate uptake system permease protein TupB (Peptoclostridium acidaminophilum (Eubacterium acidaminophilum)).